A 359-amino-acid chain; its full sequence is Peroxisome assembly protein 12 (359 aa).

Residues 1-19 (MAEHGAHFTAASVADDQPS) are Peroxisomal matrix-facing. Residues 20–47 (IFEVVAQDSLMTAVRPALQHVVKVLAES) form a helical membrane-spanning segment. Topologically, residues 48–51 (NPTH) are cytoplasmic. The chain crosses the membrane as a helical span at residues 52–76 (YGFLWRWFDEIFTLLDLLLQQHYLS). Residues 77–109 (RTSASFSENFYGLKRIVMGDTHKSQRLASAGLP) lie on the Peroxisomal matrix side of the membrane. A helical membrane pass occupies residues 110–139 (KQQLWKSIMFLVLLPYLKVKLEKLVSSLRE). The Cytoplasmic portion of the chain corresponds to 140–144 (EDEYS). The chain crosses the membrane as a helical span at residues 145-183 (IHPPSSRWKRFYRAFLAAYPFVNMAWEGWFLVQQLRYIL). The Peroxisomal matrix portion of the chain corresponds to 184–249 (GKAQHHSPLL…VGGVALSLST (66 aa)). The chain crosses the membrane as a helical span at residues 250–277 (GLSVGVFFLQFLDWWYSSENQETIKSLT). Topologically, residues 278 to 359 (ALPTPPPPVH…HLIKLYSPEN (82 aa)) are cytoplasmic. Zn(2+) is bound by residues cysteine 304, cysteine 307, cysteine 325, and cysteine 328. Residues 304–343 (CPLCRKTRVNDTVLATSGYVFCYRCVFHYVRSHQACPITG) form an RING-type; degenerate zinc finger.

Belongs to the pex2/pex10/pex12 family. Component of the PEX2-PEX10-PEX12 retrotranslocation channel, composed of PEX2, PEX10 and PEX12. Interacts with PEX19 via its cytoplasmic domain.

It localises to the peroxisome membrane. Its pathway is protein modification; protein ubiquitination. In terms of biological role, component of a retrotranslocation channel required for peroxisome organization by mediating export of the PEX5 receptor from peroxisomes to the cytosol, thereby promoting PEX5 recycling. The retrotranslocation channel is composed of PEX2, PEX10 and PEX12; each subunit contributing transmembrane segments that coassemble into an open channel that specifically allows the passage of PEX5 through the peroxisomal membrane. PEX12 also regulates PEX5 recycling by activating the E3 ubiquitin-protein ligase activity of PEX10. When PEX5 recycling is compromised, PEX12 stimulates PEX10-mediated polyubiquitination of PEX5, leading to its subsequent degradation. The protein is Peroxisome assembly protein 12 of Homo sapiens (Human).